Consider the following 580-residue polypeptide: Tripeptidyl-peptidase sed5 (580 aa).

Residues methionine 1–valine 21 are disordered. The Peptidase S53 domain occupies arginine 181–isoleucine 567. Asparagine 236 carries an N-linked (GlcNAc...) asparagine glycan. Active-site charge relay system residues include glutamate 269, aspartate 273, and serine 479. Residues aspartate 523 and isoleucine 524 each contribute to the Ca(2+) site. A glycan (N-linked (GlcNAc...) asparagine) is linked at asparagine 529. Ca(2+)-binding residues include glycine 543, glycine 545, and aspartate 547.

Ca(2+) is required as a cofactor.

It localises to the secreted. The protein localises to the extracellular space. It carries out the reaction Release of an N-terminal tripeptide from a polypeptide.. Its function is as follows. Secreted tripeptidyl-peptidase which degrades proteins at acidic pHs and is involved in virulence. The protein is Tripeptidyl-peptidase sed5 (sed5) of Aspergillus fumigatus (strain ATCC MYA-4609 / CBS 101355 / FGSC A1100 / Af293) (Neosartorya fumigata).